The sequence spans 375 residues: Succinyl-diaminopimelate desuccinylase (375 aa).

Zn(2+) is bound at residue histidine 66. Aspartate 68 is an active-site residue. A Zn(2+)-binding site is contributed by aspartate 99. Catalysis depends on glutamate 133, which acts as the Proton acceptor. Positions 134, 162, and 348 each coordinate Zn(2+).

Belongs to the peptidase M20A family. DapE subfamily. In terms of assembly, homodimer. Zn(2+) is required as a cofactor. It depends on Co(2+) as a cofactor.

The catalysed reaction is N-succinyl-(2S,6S)-2,6-diaminopimelate + H2O = (2S,6S)-2,6-diaminopimelate + succinate. Its pathway is amino-acid biosynthesis; L-lysine biosynthesis via DAP pathway; LL-2,6-diaminopimelate from (S)-tetrahydrodipicolinate (succinylase route): step 3/3. Catalyzes the hydrolysis of N-succinyl-L,L-diaminopimelic acid (SDAP), forming succinate and LL-2,6-diaminopimelate (DAP), an intermediate involved in the bacterial biosynthesis of lysine and meso-diaminopimelic acid, an essential component of bacterial cell walls. The polypeptide is Succinyl-diaminopimelate desuccinylase (Methylobacillus flagellatus (strain ATCC 51484 / DSM 6875 / VKM B-1610 / KT)).